The primary structure comprises 283 residues: Phosphatidylglycerol--prolipoprotein diacylglyceryl transferase (283 aa).

Helical transmembrane passes span 14–34 (LGPL…ALFL), 56–76 (MLMY…VLFY), and 88–108 (IFMV…VLIA). Arg-139 serves as a coordination point for a 1,2-diacyl-sn-glycero-3-phospho-(1'-sn-glycerol). Residues 258-278 (MGQWLSLPMIVIGVALLVFFG) form a helical membrane-spanning segment.

The protein belongs to the Lgt family.

The protein localises to the cell inner membrane. The catalysed reaction is L-cysteinyl-[prolipoprotein] + a 1,2-diacyl-sn-glycero-3-phospho-(1'-sn-glycerol) = an S-1,2-diacyl-sn-glyceryl-L-cysteinyl-[prolipoprotein] + sn-glycerol 1-phosphate + H(+). Its pathway is protein modification; lipoprotein biosynthesis (diacylglyceryl transfer). In terms of biological role, catalyzes the transfer of the diacylglyceryl group from phosphatidylglycerol to the sulfhydryl group of the N-terminal cysteine of a prolipoprotein, the first step in the formation of mature lipoproteins. The protein is Phosphatidylglycerol--prolipoprotein diacylglyceryl transferase of Chromobacterium violaceum (strain ATCC 12472 / DSM 30191 / JCM 1249 / CCUG 213 / NBRC 12614 / NCIMB 9131 / NCTC 9757 / MK).